A 705-amino-acid chain; its full sequence is Tyrosine decarboxylase (705 aa).

Residues 22–32 (RIRNSLSPSRP) show a composition bias toward polar residues. The disordered stretch occupies residues 22-81 (RIRNSLSPSRPSMSEATATGSSSSSRASTTIPSTPNMDVTPTVEDPRQNDNNASGMTRDE). Low complexity predominate over residues 33 to 55 (SMSEATATGSSSSSRASTTIPST). Residue K380 is modified to N6-(pyridoxal phosphate)lysine. Positions 554 to 620 (VKAVIAEEDE…AQKQHESLAK (67 aa)) form a coiled coil. Over residues 667–678 (HSQRPNRLSQSP) the composition is skewed to polar residues. A disordered region spans residues 667–687 (HSQRPNRLSQSPGSAGSAFFD).

It belongs to the group II decarboxylase family. The cofactor is pyridoxal 5'-phosphate. In terms of tissue distribution, expressed in the gonadal sheath projections in between the oocytes, in head RIM motor neurons and RIC interneurons.

Its subcellular location is the cytoplasm. The protein localises to the cell projection. The protein resides in the axon. It localises to the perikaryon. It carries out the reaction L-tyrosine + H(+) = tyramine + CO2. Functionally, required for the decarboxylation of tyrosine to tyramine, a precursor of octopamine but probably also itself a neurotransmitter. Involved in the regulation of egg laying, which is inhibited by tyramine. Also involved in controlling locomotion and head movements. Due to its involvement in octopamine biosynthesis, also required for crtc-1-dependent regulation of AMPK-mediated longevity which requires octopamine signaling. This chain is Tyrosine decarboxylase, found in Caenorhabditis elegans.